Consider the following 179-residue polypeptide: Shikimate kinase (179 aa).

Gly15 to Ser20 is a binding site for ATP. Thr19 provides a ligand contact to Mg(2+). Asp37, Arg61, and Gly83 together coordinate substrate. Arg122 provides a ligand contact to ATP. Position 142 (Arg142) interacts with substrate.

Belongs to the shikimate kinase family. Monomer. It depends on Mg(2+) as a cofactor.

It localises to the cytoplasm. The enzyme catalyses shikimate + ATP = 3-phosphoshikimate + ADP + H(+). The protein operates within metabolic intermediate biosynthesis; chorismate biosynthesis; chorismate from D-erythrose 4-phosphate and phosphoenolpyruvate: step 5/7. In terms of biological role, catalyzes the specific phosphorylation of the 3-hydroxyl group of shikimic acid using ATP as a cosubstrate. The sequence is that of Shikimate kinase from Coxiella burnetii (strain Dugway 5J108-111).